A 198-amino-acid chain; its full sequence is Protein ORFi in retron Ec67 (198 aa).

This sequence belongs to the CI repressor protein family.

This Escherichia coli protein is Protein ORFi in retron Ec67.